The following is a 502-amino-acid chain: Lysine--tRNA ligase (502 aa).

2 residues coordinate Mg(2+): Glu412 and Glu419.

Belongs to the class-II aminoacyl-tRNA synthetase family. In terms of assembly, homodimer. It depends on Mg(2+) as a cofactor.

It localises to the cytoplasm. It catalyses the reaction tRNA(Lys) + L-lysine + ATP = L-lysyl-tRNA(Lys) + AMP + diphosphate. The protein is Lysine--tRNA ligase of Histophilus somni (strain 2336) (Haemophilus somnus).